The sequence spans 385 residues: MKDSFLFTSESVTEGHPDKMADQISDAVLDYIIERDQKAKVACETLVSNGFCMITGELKTSVYAPMQEIAREVVKKIGYTDALYGFDYRSAAVLNGVGEQSPDINQGVDREDGEIGAGDQGLMFGYACKETETLMPLPIHLAHQLTFALAQKRKDNTLPFLRPDGKSQVSVRYENNKPVSIDTIVISTQHSPEVSQKHLKEAVIEEIVYKVLSKEYLHDNIKFFVNPTGKFVIGGPQGDAGLTGRKIIVDTYGGSCPHGGGAFSGKDPSKVDRSAAYAARYVAKNLVASGVCDKATVQLAYAIGVIEPVSIYVNTHNTSKYSSAELEKCVKSVFKLTPKGIIESLDLLRPIYSLTSAYGHFGRELEEFTWEKTNKAEEIKAFFKR.

His-16 is an ATP binding site. Asp-18 lines the Mg(2+) pocket. Glu-44 contacts K(+). L-methionine is bound by residues Glu-57 and Gln-100. Positions 100 to 110 (QSPDINQGVDR) are flexible loop. Residues 164–166 (DGK), 230–231 (KF), Asp-239, 245–246 (RK), Ala-262, and Lys-266 contribute to the ATP site. Position 239 (Asp-239) interacts with L-methionine. An L-methionine-binding site is contributed by Lys-270.

The protein belongs to the AdoMet synthase family. Homotetramer; dimer of dimers. It depends on Mg(2+) as a cofactor. Requires K(+) as cofactor.

Its subcellular location is the cytoplasm. It catalyses the reaction L-methionine + ATP + H2O = S-adenosyl-L-methionine + phosphate + diphosphate. Its pathway is amino-acid biosynthesis; S-adenosyl-L-methionine biosynthesis; S-adenosyl-L-methionine from L-methionine: step 1/1. Functionally, catalyzes the formation of S-adenosylmethionine (AdoMet) from methionine and ATP. The overall synthetic reaction is composed of two sequential steps, AdoMet formation and the subsequent tripolyphosphate hydrolysis which occurs prior to release of AdoMet from the enzyme. In Helicobacter pylori (strain ATCC 700392 / 26695) (Campylobacter pylori), this protein is S-adenosylmethionine synthase.